Here is a 104-residue protein sequence, read N- to C-terminus: Large ribosomal subunit protein bL21 (104 aa).

The protein belongs to the bacterial ribosomal protein bL21 family. Part of the 50S ribosomal subunit. Contacts protein L20.

In terms of biological role, this protein binds to 23S rRNA in the presence of protein L20. The protein is Large ribosomal subunit protein bL21 of Helicobacter pylori (strain Shi470).